Here is a 104-residue protein sequence, read N- to C-terminus: Glutaredoxin 1 (104 aa).

The Glutaredoxin domain maps to 1-96; sequence MNKSILHTII…KLLETQPKNK (96 aa). The cysteines at positions 17 and 20 are disulfide-linked.

Belongs to the glutaredoxin family. As to quaternary structure, monomer.

Its subcellular location is the cytoplasm. Has a glutathione-disulfide oxidoreductase activity in the presence of NADPH and glutathione reductase. Reduces low molecular weight disulfides and proteins. The protein is Glutaredoxin 1 (grxC1) of Rickettsia typhi (strain ATCC VR-144 / Wilmington).